A 348-amino-acid chain; its full sequence is Dihydroorotase (348 aa).

Zn(2+)-binding residues include His-13 and His-15. Residues 15 to 17 and Asn-41 contribute to the substrate site; that span reads HLR. The Zn(2+) site is built by Lys-99, His-136, and His-174. Lys-99 is subject to N6-carboxylysine. Residue His-136 participates in substrate binding. Leu-219 lines the substrate pocket. Residue Asp-247 participates in Zn(2+) binding. Asp-247 is an active-site residue. Residues His-251 and Ala-263 each contribute to the substrate site.

Belongs to the metallo-dependent hydrolases superfamily. DHOase family. Class II DHOase subfamily. Homodimer. The cofactor is Zn(2+).

It carries out the reaction (S)-dihydroorotate + H2O = N-carbamoyl-L-aspartate + H(+). It participates in pyrimidine metabolism; UMP biosynthesis via de novo pathway; (S)-dihydroorotate from bicarbonate: step 3/3. In terms of biological role, catalyzes the reversible cyclization of carbamoyl aspartate to dihydroorotate. This chain is Dihydroorotase, found in Rhizobium johnstonii (strain DSM 114642 / LMG 32736 / 3841) (Rhizobium leguminosarum bv. viciae).